Consider the following 234-residue polypeptide: Glucosamine-6-phosphate deaminase (234 aa).

Aspartate 63 acts as the Proton acceptor; for enolization step in catalysis. The For ring-opening step role is filled by asparagine 129. Histidine 131 serves as the catalytic Proton acceptor; for ring-opening step. Glutamate 136 functions as the For ring-opening step in the catalytic mechanism.

This sequence belongs to the glucosamine/galactosamine-6-phosphate isomerase family. NagB subfamily.

It carries out the reaction alpha-D-glucosamine 6-phosphate + H2O = beta-D-fructose 6-phosphate + NH4(+). Its pathway is amino-sugar metabolism; N-acetylneuraminate degradation; D-fructose 6-phosphate from N-acetylneuraminate: step 5/5. Functionally, catalyzes the reversible isomerization-deamination of glucosamine 6-phosphate (GlcN6P) to form fructose 6-phosphate (Fru6P) and ammonium ion. This is Glucosamine-6-phosphate deaminase from Listeria monocytogenes serotype 4b (strain CLIP80459).